The chain runs to 615 residues: DNA mismatch repair protein MutL (615 aa).

The interval 363-397 (FAEPAAREPVAPRYTPAPASGSRPAAPWPNAQPGY) is disordered. Low complexity predominate over residues 364 to 391 (AEPAAREPVAPRYTPAPASGSRPAAPWP).

Belongs to the DNA mismatch repair MutL/HexB family.

Its function is as follows. This protein is involved in the repair of mismatches in DNA. It is required for dam-dependent methyl-directed DNA mismatch repair. May act as a 'molecular matchmaker', a protein that promotes the formation of a stable complex between two or more DNA-binding proteins in an ATP-dependent manner without itself being part of a final effector complex. The protein is DNA mismatch repair protein MutL of Escherichia coli O9:H4 (strain HS).